Reading from the N-terminus, the 531-residue chain is Jacalin-related lectin 16 (531 aa).

Jacalin-type lectin domains lie at methionine 1 to tryptophan 87, proline 90 to threonine 232, leucine 235 to proline 378, and threonine 385 to proline 528.

Belongs to the jacalin lectin family.

The sequence is that of Jacalin-related lectin 16 (JAL16) from Arabidopsis thaliana (Mouse-ear cress).